We begin with the raw amino-acid sequence, 1507 residues long: Chromatin-remodeling ATPase INO80 (1507 aa).

Disordered regions lie at residues P30–D82 and R428–Q452. Positions G38 to S67 are enriched in polar residues. The DBINO domain occupies A350–S475. Basic and acidic residues predominate over residues R428–R450. In terms of domain architecture, Helicase ATP-binding spans V598–M769. An ATP-binding site is contributed by D611 to T618. Positions T1210–Q1360 constitute a Helicase C-terminal domain. Residues L1415 to N1507 form a disordered region. Residues A1491–N1507 are compositionally biased toward polar residues.

This sequence belongs to the SNF2/RAD54 helicase family. Component of the INO80 chromatin-remodeling complex. Associates with REF6/EIN6.

The protein localises to the nucleus. The catalysed reaction is ATP + H2O = ADP + phosphate + H(+). Its function is as follows. ATPase component of the chromatin remodeling INO80 complex which is involved in transcriptional regulation, DNA replication and DNA repair. Binds DNA. As part of the INO80 complex, remodels chromatin by shifting nucleosomes. The INO80 complex controls ethylene-induced H2A.Z eviction dynamics. Positive regulator of homologous recombination, but not an essential component of homologous recombination. Not involved in the illegitimate repair pathway. This Arabidopsis thaliana (Mouse-ear cress) protein is Chromatin-remodeling ATPase INO80.